The chain runs to 186 residues: dCTP deaminase (186 aa).

Residue 107 to 112 coordinates dCTP; sequence KSTYAR. E133 functions as the Proton donor/acceptor in the catalytic mechanism. DCTP is bound by residues Q152, Y166, and Q176.

The protein belongs to the dCTP deaminase family. Homotrimer.

The catalysed reaction is dCTP + H2O + H(+) = dUTP + NH4(+). Its pathway is pyrimidine metabolism; dUMP biosynthesis; dUMP from dCTP (dUTP route): step 1/2. Its function is as follows. Catalyzes the deamination of dCTP to dUTP. In Campylobacter jejuni (strain RM1221), this protein is dCTP deaminase.